The primary structure comprises 87 residues: uncharacterized protein (87 aa).

Residues 44–64 (DALYLAGSTIFTIVTTLVAWF) form a helical membrane-spanning segment.

This sequence belongs to the SPP1 holin family.

It is found in the membrane. This is an uncharacterized protein from Bacillus licheniformis.